The chain runs to 285 residues: Energy-coupling factor transporter ATP-binding protein EcfA3 (285 aa).

Residues 6-242 enclose the ABC transporter domain; sequence LKVEELNYNY…KEVIRKVNLR (237 aa). 39–46 contributes to the ATP binding site; the sequence is GGNGVGKS.

Belongs to the ABC transporter superfamily. Energy-coupling factor EcfA family. In terms of assembly, forms a stable energy-coupling factor (ECF) transporter complex composed of 2 membrane-embedded substrate-binding proteins (S component), 2 ATP-binding proteins (A component) and 2 transmembrane proteins (T component).

The protein resides in the cell membrane. Its function is as follows. ATP-binding (A) component of a common energy-coupling factor (ECF) ABC-transporter complex. Unlike classic ABC transporters this ECF transporter provides the energy necessary to transport a number of different substrates. In Clostridium perfringens (strain ATCC 13124 / DSM 756 / JCM 1290 / NCIMB 6125 / NCTC 8237 / Type A), this protein is Energy-coupling factor transporter ATP-binding protein EcfA3.